The following is a 166-amino-acid chain: Large ribosomal subunit protein uL11z (166 aa).

It belongs to the universal ribosomal protein uL11 family.

Its function is as follows. Binds directly to 26S ribosomal RNA. The protein is Large ribosomal subunit protein uL11z (RPL12A) of Arabidopsis thaliana (Mouse-ear cress).